A 342-amino-acid chain; its full sequence is Alpha-(1,3)-fucosyltransferase 7 (342 aa).

Residues 1–11 (MQNAGLSPTPS) lie on the Cytoplasmic side of the membrane. A helical; Signal-anchor for type II membrane protein transmembrane segment spans residues 12-31 (LRALGGLAMAALLSTVWLWW). Over 32–342 (RLGAAPGGAP…YQDLEGWFQA (311 aa)) the chain is Extracellular. A disulfide bond links Cys-68 and Cys-76. Asn-81 carries an N-linked (GlcNAc...) asparagine glycan. A disulfide bridge connects residues Cys-211 and Cys-214. The N-linked (GlcNAc...) asparagine glycan is linked to Asn-291. An intrachain disulfide couples Cys-318 to Cys-321.

This sequence belongs to the glycosyltransferase 10 family. Post-translationally, N-glycosylated. In terms of tissue distribution, expressed in thymus, spleen, liver and lung. Highly expressed in the thymus and lower expressed in the lung.

It localises to the membrane. It carries out the reaction an N-acetyl-alpha-neuraminyl-(2-&gt;3)-beta-D-galactosyl-(1-&gt;4)-N-acetyl-beta-D-glucosaminyl derivative + GDP-beta-L-fucose = an alpha-Neu5Ac-(2-&gt;3)-beta-D-Gal-(1-&gt;4)-[alpha-L-Fuc-(1-&gt;3)]-beta-D-GlcNAc derivative + GDP + H(+). The catalysed reaction is a neolactoside IV(3)-alpha-NeuAc-nLc4Cer + GDP-beta-L-fucose = a neolactoside IV(3)-alpha-NeuNAc,III(3)-alpha-Fuc-nLc4Cer + GDP + H(+). The enzyme catalyses a neolactoside VI(3)-alpha-NeuNAc-nLc6Cer + GDP-beta-L-fucose = a neolactoside VI(3)-alpha-NeuAc,V(3)-alphaFuc-nLc6Cer + GDP + H(+). It catalyses the reaction an alpha-Neu5Ac-(2-&gt;3)-beta-D-Gal-(1-&gt;4)-beta-D-GlcNAc-(1-&gt;3)-beta-D-Gal-(1-&gt;4)-[alpha-L-Fuc-(1-&gt;3)]-beta-D-GlcNAc derivative + GDP-beta-L-fucose = an alpha-Neu5Ac-(2-&gt;3)-beta-D-Gal-(1-&gt;4)-[alpha-L-Fuc-(1-&gt;3)]-beta-D-GlcNAc-(1-&gt;3)-beta-D-Gal-(1-&gt;4)-[alpha-L-Fuc-(1-&gt;3)]-beta-D-GlcNAc derivative + GDP + H(+). It carries out the reaction an alpha-Neu5Ac-(2-&gt;3)-beta-D-Gal-(1-&gt;4)-beta-D-GlcNAc6S derivative + GDP-beta-L-fucose = an alpha-Neu5Ac-(2-&gt;3)-beta-D-Gal-(1-&gt;4)-[alpha-L-Fuc-(1-&gt;3)]-beta-D-GlcNAc6S derivative + GDP + H(+). The catalysed reaction is alpha-Neu5Ac-(2-&gt;3)-beta-D-Gal-(1-&gt;4)-beta-D-GlcNAc-(1-&gt;3)-beta-D-Gal-(1-&gt;4)-D-Glc + GDP-beta-L-fucose = alpha-Neu5Ac-(2-&gt;3)-beta-D-Gal-(1-&gt;4)-[alpha-L-Fuc-(1-&gt;3)]-beta-D-GlcNAc-(1-&gt;3)-beta-D-Gal-(1-&gt;4)-D-Glc + GDP + H(+). The enzyme catalyses alpha-Neu5Ac-(2-&gt;3)-beta-D-Gal-(1-&gt;4)-beta-D-GlcNAc-(1-&gt;3)-beta-D-Gal-(1-&gt;4)-[alpha-L-Fuc-(1-&gt;3)]-beta-D-GlcNAc-(1-&gt;3)-beta-D-Gal-(1-&gt;4)-beta-D-GlcNAc + GDP-beta-L-fucose = alpha-Neu5Ac-(2-&gt;3)-beta-D-Gal-(1-&gt;4)-[alpha-L-Fuc-(1-&gt;3)]-beta-D-GlcNAc-(1-&gt;3)-beta-D-Gal-(1-&gt;4)-[alpha-L-Fuc-(1-&gt;3)]-beta-D-GlcNAc-(1-&gt;3)-beta-D-Gal-(1-&gt;4)-beta-D-GlcNAc + GDP + H(+). It catalyses the reaction alpha-Neu5Ac-(2-&gt;3)-beta-D-Gal-(1-&gt;4)-beta-D-GlcNAc-(1-&gt;3)-beta-D-Gal-(1-&gt;4)-beta-D-GlcNAc-(1-&gt;3)-beta-D-Gal-(1-&gt;4)-beta-D-GlcNAc + GDP-beta-L-fucose = alpha-Neu5Ac-(2-&gt;3)-beta-D-Gal-(1-&gt;4)-[alpha-L-Fuc-(1-&gt;3)]-beta-D-GlcNAc-(1-&gt;3)-beta-D-Gal-(1-&gt;4)-beta-D-GlcNAc-(1-&gt;3)-beta-D-Gal-(1-&gt;4)-beta-D-GlcNAc + GDP + H(+). It functions in the pathway protein modification; protein glycosylation. With respect to regulation, inhibited by NaCl. Inhibited by GDP in a concentration dependent manner, with an IC(50) value of 93 uM. Also inhibited by GMP and GTP. Inhibited by N-ethylmaleimide. Activated by poly(ethylene glycol) by enhancing the thermal stability of FUT7. Activated by Mn2+, Ca2+, and Mg2+. Both panosialin A and B inhibit activity with IC(50) values of 4.8 and 5.3 ug/ml, respectively. Inhibited by gallic acid (GA) and (-)-epigallocatechin gallate (EGCG) in a time-dependent and irreversible manner with IC(50) values of 60 and 700 nM, respectively. Functionally, catalyzes the transfer of L-fucose, from a guanosine diphosphate-beta-L-fucose, to the N-acetyl glucosamine (GlcNAc) of a distal alpha2,3 sialylated lactosamine unit of a glycoprotein or a glycolipid-linked sialopolylactosamines chain through an alpha-1,3 glycosidic linkage and participates in the final fucosylation step in the biosynthesis of the sialyl Lewis X (sLe(x)), a carbohydrate involved in cell and matrix adhesion during leukocyte trafficking and fertilization. In vitro, also synthesizes sialyl-dimeric-Lex structures, from VIM-2 structures and both di-fucosylated and trifucosylated structures from mono-fucosylated precursors. However does not catalyze alpha 1-3 fucosylation when an internal alpha 1-3 fucosylation is present in polylactosamine chain and the fucosylation rate of the internal GlcNAc residues is reduced once fucose has been added to the distal GlcNAc. Also catalyzes the transfer of a fucose from GDP-beta-fucose to the 6-sulfated a(2,3)sialylated substrate to produce 6-sulfo sLex mediating significant L-selectin-dependent cell adhesion. Through sialyl-Lewis(x) biosynthesis, can control SELE- and SELP-mediated cell adhesion with leukocytes and allows leukocytes tethering and rolling along the endothelial tissue thereby enabling the leukocytes to accumulate at a site of inflammation. May enhance embryo implantation through sialyl Lewis X (sLeX)-mediated adhesion of embryo cells to endometrium. May affect insulin signaling by up-regulating the phosphorylation and expression of some signaling molecules involved in the insulin-signaling pathway through SLe(x) which is present on the glycans of the INSRR alpha subunit. The polypeptide is Alpha-(1,3)-fucosyltransferase 7 (Bos taurus (Bovine)).